The sequence spans 310 residues: Zinc finger protein 346 (310 aa).

An N-acetylmethionine modification is found at Met-1. Over residues Met-1–Ala-12 the composition is skewed to low complexity. A disordered region spans residues Met-1 to Gly-33. The Matrin-type 1 zinc-finger motif lies at Phe-70–Tyr-104. Residues Cys-75, Cys-78, His-91, and His-97 each contribute to the Zn(2+) site. Lys-114 participates in a covalent cross-link: Glycyl lysine isopeptide (Lys-Gly) (interchain with G-Cter in SUMO2). Residues Asp-131–Lys-165 form a Matrin-type 2 zinc finger. Residues Cys-136, Cys-139, His-152, and His-158 each coordinate Zn(2+). Lys-170 is covalently cross-linked (Glycyl lysine isopeptide (Lys-Gly) (interchain with G-Cter in SUMO2)). Matrin-type zinc fingers lie at residues Asp-198 to Leu-232 and Gly-252 to Thr-286. The interval Lys-278–Asp-310 is disordered. 2 stretches are compositionally biased toward polar residues: residues Ser-283–Gly-292 and Gln-299–Asp-310.

As to quaternary structure, forms a heteromeric complex with XPO5 and ILF3. Found in a nuclear export complex with XPO5, RAN, ILF3, ZNF346 and double-stranded RNA. Interacts with XPO5. Interacts with ILF3 in an RNA-independent manner.

It is found in the nucleus. The protein localises to the nucleolus. The protein resides in the cytoplasm. Its function is as follows. Binds with low affinity to dsDNA and ssRNA, and with high affinity to dsRNA, with no detectable sequence specificity. The polypeptide is Zinc finger protein 346 (ZNF346) (Pongo abelii (Sumatran orangutan)).